A 299-amino-acid polypeptide reads, in one-letter code: Telomere repeat-binding factor 2 (299 aa).

Residues 1-61 (MGAPKQKWTP…KWRNISVTAL (61 aa)) enclose the HTH myb-type domain. A DNA-binding region (H-T-H motif) is located at residues 28-57 (WRTILSDTEFSLILKSRSNVDLKDKWRNIS). Residues 93-116 (LTNDDERAKPTSPGGSGGGSPRTC) form a disordered region. Residues 121–189 (SITSLDKIIF…KIKHKYRFSS (69 aa)) enclose the H15 domain. Positions 243–288 (EAAEAAARAVAEAEFAITEAEQAAKEAERAEAEAEAAQIFAKAAMK) form a coiled coil.

This sequence belongs to the histone H1/H5 family. SMH subfamily. Forms a homodimer and heterodimers with TRB1 or TRB3. Interacts with TRB1 and TRB3. Ubiquitous.

Its subcellular location is the nucleus. It is found in the nucleolus. The protein resides in the chromosome. Its function is as follows. Binds preferentially double-stranded telomeric repeats, but it can also bind to the single G-rich telomeric strand. In Arabidopsis thaliana (Mouse-ear cress), this protein is Telomere repeat-binding factor 2 (TRB2).